Here is a 264-residue protein sequence, read N- to C-terminus: tRNA (guanine-N(1)-)-methyltransferase (264 aa).

S-adenosyl-L-methionine contacts are provided by residues glycine 125 and 145–150 (LGDFVL).

It belongs to the RNA methyltransferase TrmD family. In terms of assembly, homodimer.

It is found in the cytoplasm. It carries out the reaction guanosine(37) in tRNA + S-adenosyl-L-methionine = N(1)-methylguanosine(37) in tRNA + S-adenosyl-L-homocysteine + H(+). Its function is as follows. Specifically methylates guanosine-37 in various tRNAs. The sequence is that of tRNA (guanine-N(1)-)-methyltransferase from Burkholderia cenocepacia (strain HI2424).